Here is a 277-residue protein sequence, read N- to C-terminus: Phosphoenolpyruvate synthase regulatory protein (277 aa).

157 to 164 is an ADP binding site; it reads GVSRCGKT.

Belongs to the pyruvate, phosphate/water dikinase regulatory protein family. PSRP subfamily.

It carries out the reaction [pyruvate, water dikinase] + ADP = [pyruvate, water dikinase]-phosphate + AMP + H(+). The enzyme catalyses [pyruvate, water dikinase]-phosphate + phosphate + H(+) = [pyruvate, water dikinase] + diphosphate. Functionally, bifunctional serine/threonine kinase and phosphorylase involved in the regulation of the phosphoenolpyruvate synthase (PEPS) by catalyzing its phosphorylation/dephosphorylation. The protein is Phosphoenolpyruvate synthase regulatory protein of Escherichia coli O1:K1 / APEC.